Consider the following 445-residue polypeptide: Exodeoxyribonuclease 7 large subunit (445 aa).

The protein belongs to the XseA family. As to quaternary structure, heterooligomer composed of large and small subunits.

The protein localises to the cytoplasm. The catalysed reaction is Exonucleolytic cleavage in either 5'- to 3'- or 3'- to 5'-direction to yield nucleoside 5'-phosphates.. Functionally, bidirectionally degrades single-stranded DNA into large acid-insoluble oligonucleotides, which are then degraded further into small acid-soluble oligonucleotides. In Staphylococcus aureus (strain JH1), this protein is Exodeoxyribonuclease 7 large subunit.